Reading from the N-terminus, the 61-residue chain is MAKKSMIAKAKRKPKFKVRAYTRCRICGRPKSVYRDFGLCRICLRKMANEGLLPGVKKASW.

Zn(2+)-binding residues include cysteine 24, cysteine 27, cysteine 40, and cysteine 43.

This sequence belongs to the universal ribosomal protein uS14 family. Zinc-binding uS14 subfamily. Part of the 30S ribosomal subunit. Contacts proteins S3 and S10. Requires Zn(2+) as cofactor.

In terms of biological role, binds 16S rRNA, required for the assembly of 30S particles and may also be responsible for determining the conformation of the 16S rRNA at the A site. This chain is Small ribosomal subunit protein uS14, found in Nitratiruptor sp. (strain SB155-2).